A 295-amino-acid polypeptide reads, in one-letter code: Pantothenate synthetase (295 aa).

Residue histidine 37 is the Proton donor of the active site. Glutamine 61 contributes to the (R)-pantoate binding site. Glutamine 61 lines the beta-alanine pocket. Residue 154 to 157 (GRKD) coordinates ATP. Glutamine 160 provides a ligand contact to (R)-pantoate. ATP is bound by residues valine 183 and 191–194 (QSSR).

It belongs to the pantothenate synthetase family. In terms of assembly, homodimer.

The protein localises to the cytoplasm. It carries out the reaction (R)-pantoate + beta-alanine + ATP = (R)-pantothenate + AMP + diphosphate + H(+). Its pathway is cofactor biosynthesis; (R)-pantothenate biosynthesis; (R)-pantothenate from (R)-pantoate and beta-alanine: step 1/1. Its function is as follows. Catalyzes the condensation of pantoate with beta-alanine in an ATP-dependent reaction via a pantoyl-adenylate intermediate. The polypeptide is Pantothenate synthetase (Salinibacter ruber (strain DSM 13855 / M31)).